Reading from the N-terminus, the 102-residue chain is MLKLKLLTSLAVFTTLLFSCGASYALSSCSPGVIKYIRYETDNAKTLVIIKLDSMNNENYTDNPRLLQPLTYAYAVGEKVTLHTESCTSGDHGFASFSLRNK.

This chain is Putative protein p7 (7), found in Escherichia coli (Bacteriophage APSE-1).